The sequence spans 24 residues: Arginine attenuator peptide (24 aa).

The protein belongs to the arginine attenuator peptide family.

Its function is as follows. Arginine attenuator peptide (AAP) that has a regulatory role in the production of arginine-specific carbamoyl phosphate synthetase. Encoded by an upstream open reading frame (uORF) within the 5'-leader region of arginine-specific carbamoyl phosphate synthetase small chain (arg-2) mRNA, it attenuates the translation of the downstream arg-2 ORF. In the presence of high concentrations of arginine, ribosomes translating the uORF encoding AAP stall at the termination codon, resulting in reduced translation from the downstream arg-2 initiation codon. The polypeptide is Arginine attenuator peptide (Neurospora crassa (strain ATCC 24698 / 74-OR23-1A / CBS 708.71 / DSM 1257 / FGSC 987)).